The primary structure comprises 443 residues: Chromosomal replication initiator protein DnaA (443 aa).

Residues 1 to 76 (MMDAWPRCLE…GNGEVALAVG (76 aa)) are domain I, interacts with DnaA modulators. The domain II stretch occupies residues 76–105 (GSRPRAPEPAPAPVAATIAPQAAPIAPFAG). The interval 106–323 (NLDSHYTFAN…GALNTLVARA (218 aa)) is domain III, AAA+ region. Positions 151, 153, 154, and 155 each coordinate ATP. A domain IV, binds dsDNA region spans residues 324–443 (NFTGRSITVE…WEKLIRKLSE (120 aa)).

This sequence belongs to the DnaA family. As to quaternary structure, oligomerizes as a right-handed, spiral filament on DNA at oriC.

Its subcellular location is the cytoplasm. In terms of biological role, plays an essential role in the initiation and regulation of chromosomal replication. ATP-DnaA binds to the origin of replication (oriC) to initiate formation of the DNA replication initiation complex once per cell cycle. Binds the DnaA box (a 9 base pair repeat at the origin) and separates the double-stranded (ds)DNA. Forms a right-handed helical filament on oriC DNA; dsDNA binds to the exterior of the filament while single-stranded (ss)DNA is stabiized in the filament's interior. The ATP-DnaA-oriC complex binds and stabilizes one strand of the AT-rich DNA unwinding element (DUE), permitting loading of DNA polymerase. After initiation quickly degrades to an ADP-DnaA complex that is not apt for DNA replication. Binds acidic phospholipids. The chain is Chromosomal replication initiator protein DnaA from Xanthomonas oryzae pv. oryzae (strain KACC10331 / KXO85).